A 457-amino-acid chain; its full sequence is Argininosuccinate lyase (457 aa).

This sequence belongs to the lyase 1 family. Argininosuccinate lyase subfamily.

The protein resides in the cytoplasm. The enzyme catalyses 2-(N(omega)-L-arginino)succinate = fumarate + L-arginine. It participates in amino-acid biosynthesis; L-arginine biosynthesis; L-arginine from L-ornithine and carbamoyl phosphate: step 3/3. The protein is Argininosuccinate lyase of Salmonella arizonae (strain ATCC BAA-731 / CDC346-86 / RSK2980).